The primary structure comprises 929 residues: Type I restriction enzyme SauCOLORF180P endonuclease subunit (929 aa).

Positions 254–418 constitute a Helicase ATP-binding domain; the sequence is QQATETGNNG…DGRTTADIFG (165 aa). ATP is bound at residue 268-274; the sequence is TTGSGKT.

This sequence belongs to the HsdR family. In terms of assembly, the type I restriction/modification system is composed of three polypeptides R, M and S.

The enzyme catalyses Endonucleolytic cleavage of DNA to give random double-stranded fragments with terminal 5'-phosphates, ATP is simultaneously hydrolyzed.. In terms of biological role, the restriction (R) subunit of a type I restriction enzyme that recognizes an undetermined sequence and cleaves a random distance away. Subunit R is required for both nuclease and ATPase activities, but not for modification. After locating a non-methylated recognition site, the enzyme complex serves as a molecular motor that translocates DNA in an ATP-dependent manner until a collision occurs that triggers cleavage. This chain is Type I restriction enzyme SauCOLORF180P endonuclease subunit, found in Staphylococcus aureus (strain COL).